We begin with the raw amino-acid sequence, 230 residues long: UPF0502 protein Patl_1161 (230 aa).

It belongs to the UPF0502 family.

The sequence is that of UPF0502 protein Patl_1161 from Pseudoalteromonas atlantica (strain T6c / ATCC BAA-1087).